The primary structure comprises 403 residues: MKILVINAGSSSCKYQLLEMDTHAVLCSGLAERIGQDEGRLTHKIAPDTDKEEKIVQTAHFPTHVQAMEMVIALLTDAEKGVIKDKSEIAGIGHRVLHGGEAVSDPVLVDERVKGIVRECAVLGPLHNPANLMGIEVAEKLFPGVPNVAVFDTEFGMGMPKEAFMYALPYELYEDLRIRRYGFHGTSHKYIAGATAKYLGKPLSELRSITMHLGNGSSMSCVRNGKCFDTSMGLTPLEGLIMGTRCGSIDPAIVPFVMEKKGLTPEQVDTLMNKKSGLLGLCGHTDMRDVHAEVEKGNERAALALKMLVRSIKKTLGSYYFLLDGKVDALVFTAGIGENDDIVRAEVCAGLENLGIKIDAKENGTRKAGARAISTPDSSIPVLIIPTNEELQIAMATVEVLGK.

A Mg(2+)-binding site is contributed by asparagine 7. Lysine 14 is a binding site for ATP. Residue arginine 95 coordinates substrate. Aspartate 152 functions as the Proton donor/acceptor in the catalytic mechanism. Residues 212–216 (HLGNG), 286–288 (DMR), and 335–339 (GIGEN) contribute to the ATP site. Residue glutamate 389 coordinates Mg(2+).

It belongs to the acetokinase family. As to quaternary structure, homodimer. It depends on Mg(2+) as a cofactor. Mn(2+) serves as cofactor.

It localises to the cytoplasm. The enzyme catalyses acetate + ATP = acetyl phosphate + ADP. It functions in the pathway metabolic intermediate biosynthesis; acetyl-CoA biosynthesis; acetyl-CoA from acetate: step 1/2. Its function is as follows. Catalyzes the formation of acetyl phosphate from acetate and ATP. Can also catalyze the reverse reaction. The protein is Acetate kinase of Desulfovibrio desulfuricans (strain ATCC 27774 / DSM 6949 / MB).